A 118-amino-acid chain; its full sequence is Small ribosomal subunit protein uS13 (118 aa).

The disordered stretch occupies residues 94–118 (SLPLRGQRTKTNARTRKGPRKPIKK).

The protein belongs to the universal ribosomal protein uS13 family. Part of the 30S ribosomal subunit. Forms a loose heterodimer with protein S19. Forms two bridges to the 50S subunit in the 70S ribosome.

In terms of biological role, located at the top of the head of the 30S subunit, it contacts several helices of the 16S rRNA. In the 70S ribosome it contacts the 23S rRNA (bridge B1a) and protein L5 of the 50S subunit (bridge B1b), connecting the 2 subunits; these bridges are implicated in subunit movement. Contacts the tRNAs in the A and P-sites. In Aliivibrio fischeri (strain ATCC 700601 / ES114) (Vibrio fischeri), this protein is Small ribosomal subunit protein uS13.